The primary structure comprises 369 residues: Porin-like protein BUsg_347 (369 aa).

The first 23 residues, 1–23 (MKNHKSLAILIPMLFAGSTAVNA), serve as a signal peptide directing secretion.

The protein belongs to the Gram-negative porin family. Homotrimer.

It is found in the cell outer membrane. Forms pores that allow passive diffusion of small molecules across the membrane. In Buchnera aphidicola subsp. Schizaphis graminum (strain Sg), this protein is Porin-like protein BUsg_347.